We begin with the raw amino-acid sequence, 358 residues long: Gap junction alpha-5 protein (358 aa).

Over 1-19 (MGDWSFLGEFLEEVHKHST) the chain is Cytoplasmic. Residues 20-40 (VIGKVWLTVLFIFRMLVLGTA) traverse the membrane as a helical segment. Topologically, residues 41-76 (AESSWGDEQADFQCDTMQPGCGNVCYDQAFPISHIR) are extracellular. A helical transmembrane segment spans residues 77–97 (YWVLQIIFVSTPSLVYMGHAM). Topologically, residues 98–164 (HTVRMQEKRK…CSILIRTTME (67 aa)) are cytoplasmic. Residues 165-185 (VAFIVGQYLLYGIFLDTLHVC) traverse the membrane as a helical segment. The Extracellular segment spans residues 186–205 (RRSPCPHPVNCYVSRPTEKN). Residues 206–226 (VFIVFMLAVAALSLFLSLAEL) form a helical membrane-spanning segment. Over 227 to 358 (YHLGWKKLRQ…SKARSDDLSV (132 aa)) the chain is Cytoplasmic. Residues 318 to 358 (AQKPEVPNGASPGHRLPHGYQSDKRRLSKASSKARSDDLSV) are disordered. 2 positions are modified to phosphoserine: Ser-353 and Ser-357.

This sequence belongs to the connexin family. Alpha-type (group II) subfamily. In terms of assembly, a connexon is composed of a hexamer of connexins.

Its subcellular location is the cell membrane. The protein resides in the cell junction. It localises to the gap junction. Its function is as follows. One gap junction consists of a cluster of closely packed pairs of transmembrane channels, the connexons, through which materials of low MW diffuse from one cell to a neighboring cell. This Canis lupus familiaris (Dog) protein is Gap junction alpha-5 protein (GJA5).